Consider the following 296-residue polypeptide: GTPase Era (296 aa).

Residues 3 to 170 (KSGFVTIVGR…KELMFKYIPE (168 aa)) enclose the Era-type G domain. Residues 11-18 (GRPNVGKS) are G1. Position 11–18 (11–18 (GRPNVGKS)) interacts with GTP. The G2 stretch occupies residues 37–41 (QTTRN). The tract at residues 58-61 (DTPG) is G3. GTP-binding positions include 58–62 (DTPGI) and 120–123 (NKID). Residues 120–123 (NKID) are G4. A G5 region spans residues 149 to 151 (ISA). Residues 201–278 (LSEEVPHGIA…YIRLWVKVKE (78 aa)) enclose the KH type-2 domain.

It belongs to the TRAFAC class TrmE-Era-EngA-EngB-Septin-like GTPase superfamily. Era GTPase family. In terms of assembly, monomer.

The protein resides in the cytoplasm. It is found in the cell membrane. An essential GTPase that binds both GDP and GTP, with rapid nucleotide exchange. Plays a role in 16S rRNA processing and 30S ribosomal subunit biogenesis and possibly also in cell cycle regulation and energy metabolism. This chain is GTPase Era, found in Clostridium botulinum (strain ATCC 19397 / Type A).